The primary structure comprises 430 residues: Gustatory receptor-like 43a (430 aa).

The Cytoplasmic segment spans residues 1 to 31 (MSTGSHSPEAMWSATNFRRHQRKPNQVLHRW). A helical membrane pass occupies residues 32–52 (FFKGSAWIIYAIACGLHFFKL). Topologically, residues 53–79 (HYNERTNQVEESQYHRIWSKIVVVLKV) are extracellular. Residues 80-100 (ILLASPYLQYFVLGLGIYIHI) traverse the membrane as a helical segment. At 101–110 (TLVQDSKAQN) the chain is on the cytoplasmic side. The chain crosses the membrane as a helical span at residues 111–131 (FLMSLIVLGIVIGVLRRLLIF). Residues 132–168 (LHLKRDRRFLKHTVNEILHITSALEQKFGMEYKCDST) lie on the Extracellular side of the membrane. Residues 169–189 (LLVVYLAKLWILTVMLDSLWY) traverse the membrane as a helical segment. Over 190 to 277 (KPYFLSSIFL…RDNVSWLSTS (88 aa)) the chain is Cytoplasmic. A helical transmembrane segment spans residues 278 to 298 (VYLMIFTCIFNAELLIECSLF). Topologically, residues 299 to 306 (AGDELENK) are extracellular. The helical transmembrane segment at 307 to 327 (IYIITDGCLGPVCVPILYVLI) threads the bilayer. Over 328–396 (LGMCTDRFRD…IILDITCDRE (69 aa)) the chain is Cytoplasmic. The chain crosses the membrane as a helical span at residues 397–417 (FVMDYIVTVILTALSLVQYTI). The Extracellular segment spans residues 418-430 (STGGNISECVTHK). N422 carries an N-linked (GlcNAc...) asparagine glycan.

The protein resides in the cell membrane. In Drosophila melanogaster (Fruit fly), this protein is Gustatory receptor-like 43a.